Consider the following 78-residue polypeptide: Defensin-like protein (78 aa).

An N-terminal signal peptide occupies residues 1-31 (MGRSIRLFATFFLIAMLFLSTEMGPMTSAEA). 4 disulfide bridges follow: C34–C78, C45–C65, C51–C72, and C55–C74.

This sequence belongs to the DEFL family. In terms of tissue distribution, predominantly expressed in the pistil during all stages of flower development.

It is found in the secreted. May be involved in the defense of the pistil against pathogen infection. The sequence is that of Defensin-like protein from Petunia integrifolia (Violet-flowered petunia).